The sequence spans 207 residues: NAD(P)H-quinone oxidoreductase subunit K, chloroplastic (207 aa).

Residues C47, C48, C112, and C143 each contribute to the [4Fe-4S] cluster site.

This sequence belongs to the complex I 20 kDa subunit family. In terms of assembly, NDH is composed of at least 16 different subunits, 5 of which are encoded in the nucleus. The cofactor is [4Fe-4S] cluster.

The protein localises to the plastid. It localises to the chloroplast thylakoid membrane. The catalysed reaction is a plastoquinone + NADH + (n+1) H(+)(in) = a plastoquinol + NAD(+) + n H(+)(out). It catalyses the reaction a plastoquinone + NADPH + (n+1) H(+)(in) = a plastoquinol + NADP(+) + n H(+)(out). Its function is as follows. NDH shuttles electrons from NAD(P)H:plastoquinone, via FMN and iron-sulfur (Fe-S) centers, to quinones in the photosynthetic chain and possibly in a chloroplast respiratory chain. The immediate electron acceptor for the enzyme in this species is believed to be plastoquinone. Couples the redox reaction to proton translocation, and thus conserves the redox energy in a proton gradient. The protein is NAD(P)H-quinone oxidoreductase subunit K, chloroplastic of Psilotum nudum (Whisk fern).